The following is a 297-amino-acid chain: uncharacterized protein (297 aa).

Residue Glu46 is part of the active site.

It belongs to the PhzF family. Homodimer and homotetramer.

This is an uncharacterized protein from Escherichia coli (strain K12).